The primary structure comprises 44 residues: Photosystem I reaction center subunit IX (44 aa).

The helical transmembrane segment at 7–27 threads the bilayer; it reads YLSVAPVISTLWFGSLAGLLI.

It belongs to the PsaJ family.

The protein resides in the plastid. Its subcellular location is the chloroplast thylakoid membrane. In terms of biological role, may help in the organization of the PsaE and PsaF subunits. In Populus alba (White poplar), this protein is Photosystem I reaction center subunit IX.